A 757-amino-acid chain; its full sequence is Xaa-Pro dipeptidyl-peptidase (757 aa).

Residues Ser348, Asp468, and His498 each act as charge relay system in the active site.

This sequence belongs to the peptidase S15 family. As to quaternary structure, homodimer.

Its subcellular location is the cytoplasm. It catalyses the reaction Hydrolyzes Xaa-Pro-|- bonds to release unblocked, N-terminal dipeptides from substrates including Ala-Pro-|-p-nitroanilide and (sequentially) Tyr-Pro-|-Phe-Pro-|-Gly-Pro-|-Ile.. Removes N-terminal dipeptides sequentially from polypeptides having unsubstituted N-termini provided that the penultimate residue is proline. The polypeptide is Xaa-Pro dipeptidyl-peptidase (Streptococcus pneumoniae serotype 19F (strain G54)).